We begin with the raw amino-acid sequence, 173 residues long: Large ribosomal subunit protein uL10 (173 aa).

It belongs to the universal ribosomal protein uL10 family. Part of the ribosomal stalk of the 50S ribosomal subunit. The N-terminus interacts with L11 and the large rRNA to form the base of the stalk. The C-terminus forms an elongated spine to which L12 dimers bind in a sequential fashion forming a multimeric L10(L12)X complex.

In terms of biological role, forms part of the ribosomal stalk, playing a central role in the interaction of the ribosome with GTP-bound translation factors. The chain is Large ribosomal subunit protein uL10 from Thermus thermophilus (strain ATCC BAA-163 / DSM 7039 / HB27).